The primary structure comprises 66 residues: UPF0337 protein M6_Spy1542 (66 aa).

The span at 1–10 shows a compositional bias: basic and acidic residues; the sequence is MSEEKLKAKV. The tract at residues 1-22 is disordered; the sequence is MSEEKLKAKVEQASGSLKEGAG.

The protein belongs to the UPF0337 (CsbD) family.

This is UPF0337 protein M6_Spy1542 from Streptococcus pyogenes serotype M6 (strain ATCC BAA-946 / MGAS10394).